We begin with the raw amino-acid sequence, 512 residues long: Cytochrome P450 monooxygenase cheE (512 aa).

Residues 5–27 (YFAAESSWSPYVILVLALAAMVA) form a helical membrane-spanning segment. 3 N-linked (GlcNAc...) asparagine glycosylation sites follow: N53, N124, and N168. C455 serves as a coordination point for heme. 2 N-linked (GlcNAc...) asparagine glycosylation sites follow: N499 and N508.

The protein belongs to the cytochrome P450 family. Heme serves as cofactor.

Its subcellular location is the membrane. The protein operates within secondary metabolite biosynthesis. Functionally, cytochrome P450 monooxygenase; part of the gene cluster that mediates the biosynthesis of chaetoglobosin A which has a unique inhibitory activity against actin polymerization in mammalian cells. Chaetoglobosin A and its intermediates are involved in the morphological differentiation of C.globosum. The first step of the pathway is the synthesis of prochaetoglobosin I via condensation of one acetyl-CoA, 8 malonyl-CoA, and a L-tryptophan molecule by the PKS-NRPS hybrid synthetase cheA, followed by reduction of backbone double bond to install desired geometry by the enoyl reductase cheB. Further multiple oxidation steps performed by the cytochrome P450 monooxygenases cheE and cheG, as well as by the FAD-linked oxidoreductase cheF, lead to the formation of chaetoglobosin A. Depending on the order of action of these reductases, distinct intermediates can be identified. Within the pathway, the cytochrome P450 monooxygenase cheE catalyzes a stereospecific epoxidation on prochaetoglobosin I, cytoglobosin D, and chaetoglobosin J intermediates. The FAD-linked oxidoreductase cheF performs dehydrogenation of the C-20 hydroxyl groups in the 20-dihyrochaetoglobosin A and cytoglobosin D intermediates. Finally, the cytochrome P450 monooxygenase cheG can catalyze the stereospecific dihydroxylation of prochaetoglobosin I and prochaetoglobosin IV at C-19 and C-20, respectively. The Diels-Alderase cheD may play a role in the post-PKS-NRPS biosynthetic steps catalyzing Diels-Alder cyclization. The protein is Cytochrome P450 monooxygenase cheE of Chaetomium globosum (strain ATCC 6205 / CBS 148.51 / DSM 1962 / NBRC 6347 / NRRL 1970) (Soil fungus).